Here is a 128-residue protein sequence, read N- to C-terminus: MDAVAVYHGKISRETGEKLLLATGLDGSYLLRDSESVPGVYCLCVLYQGYIYTYRVSQTETGSWSAETAPGVHKRFFRKIKNLISAFQKPDQGIVIPLQYPVEKKPSARSTQGATGRRDDPDVFLKTP.

The SH2 domain occupies 6-102 (VYHGKISRET…GIVIPLQYPV (97 aa)). Residues 67–92 (ETAPGVHKRFFRKIKNLISAFQKPDQ) form an interaction with FYN SH3 domain region. An N6-acetyllysine modification is found at lysine 89. The segment at 104–128 (KKPSARSTQGATGRRDDPDVFLKTP) is disordered. A compositionally biased stretch (basic and acidic residues) spans 116 to 128 (GRRDDPDVFLKTP).

In terms of assembly, interacts with CD84, CD244, LY9, SLAMF1 and FYN. Interacts with NTRK1, NTRK2 and NTRK3.

The protein resides in the cytoplasm. Its function is as follows. Cytoplasmic adapter regulating receptors of the signaling lymphocytic activation molecule (SLAM) family such as SLAMF1, CD244, LY9, CD84, SLAMF6 and SLAMF7. In SLAM signaling seems to cooperate with SH2D1B/EAT-2. Initially it has been proposed that association with SLAMF1 prevents SLAMF1 binding to inhibitory effectors including INPP5D/SHIP1 and PTPN11/SHP-2. However, by simultaneous interactions, recruits FYN which subsequently phosphorylates and activates SLAMF1. Positively regulates CD244/2B4- and CD84-mediated natural killer (NK) cell functions. Can also promote CD48-, SLAMF6 -, LY9-, and SLAMF7-mediated NK cell activation. In the context of NK cell-mediated cytotoxicity enhances conjugate formation with target cells. May also regulate the activity of the neurotrophin receptors NTRK1, NTRK2 and NTRK3. The polypeptide is SH2 domain-containing protein 1A (SH2D1A) (Bos taurus (Bovine)).